The primary structure comprises 512 residues: 2,3-bisphosphoglycerate-independent phosphoglycerate mutase (512 aa).

Residues aspartate 14 and serine 64 each coordinate Mn(2+). Serine 64 serves as the catalytic Phosphoserine intermediate. Substrate-binding positions include histidine 125, 155–156 (RD), arginine 187, arginine 193, 259–262 (RADR), and lysine 332. Mn(2+) is bound by residues aspartate 399, histidine 403, aspartate 440, histidine 441, and histidine 459.

The protein belongs to the BPG-independent phosphoglycerate mutase family. As to quaternary structure, monomer. Mn(2+) serves as cofactor.

It catalyses the reaction (2R)-2-phosphoglycerate = (2R)-3-phosphoglycerate. The protein operates within carbohydrate degradation; glycolysis; pyruvate from D-glyceraldehyde 3-phosphate: step 3/5. Its function is as follows. Catalyzes the interconversion of 2-phosphoglycerate and 3-phosphoglycerate. The protein is 2,3-bisphosphoglycerate-independent phosphoglycerate mutase of Vesicomyosocius okutanii subsp. Calyptogena okutanii (strain HA).